A 661-amino-acid polypeptide reads, in one-letter code: Methyl-accepting chemotaxis protein McpA (661 aa).

Over 1 to 16 (MKKILQLIKQRSITRK) the chain is Cytoplasmic. A helical membrane pass occupies residues 17–37 (LLVSFLSILIIPVVILAIFAY). Residues 38-281 (QSASSSLDRQ…IHEAAQPVLH (244 aa)) lie on the Extracellular side of the membrane. The region spanning 152–228 (ITDPYKTAST…QSGTELKGDW (77 aa)) is the Cache domain. The chain crosses the membrane as a helical span at residues 282–302 (LALIVLAAAIIIGIIVMTLII). The 53-residue stretch at 303-355 (RSITTPLKQLVGSSKRISEGDLTETIDIRSKDELGELGKSFNNMASSLRSLIH) folds into the HAMP domain. Topologically, residues 303 to 661 (RSITTPLKQL…RDMTKRFKIE (359 aa)) are cytoplasmic. Position 370 is a glutamate methyl ester (Glu) (Glu-370). Residues 374–610 (SAAQTSKATE…EVSGASEHIA (237 aa)) form the Methyl-accepting transducer domain. Gln-593 and Gln-594 each carry deamidated glutamine. Gln-594 is modified (glutamate methyl ester (Gln)). Residues Glu-629 and Glu-636 each carry the glutamate methyl ester (Glu) modification.

It belongs to the methyl-accepting chemotaxis (MCP) protein family. In terms of assembly, interacts with FloT. Deamidated by CheD on Gln-593 and Gln-594, producing glutamate residues. The glutamate residues are then methylated. Other additional sites are deamidated and methylated as well.

Its subcellular location is the cell membrane. It localises to the membrane raft. In terms of biological role, chemotactic-signal transducers respond to changes in the concentration of attractants and repellents in the environment, transduce a signal from the outside to the inside of the cell, and facilitate sensory adaptation through the variation of the level of methylation. All amino acids serve as attractants in B.subtilis, they appear to cause an increase in the turnover methyl groups, leading to methylation of an unidentified acceptor, while repellents have been shown to cause a decrease in methyl group turnover. The methyl groups are added by a methyltransferase and removed by a methylesterase. McpA is required for taxis towards glucose and alpha-methylglucoside. The chain is Methyl-accepting chemotaxis protein McpA (mcpA) from Bacillus subtilis (strain 168).